Consider the following 117-residue polypeptide: uncharacterized protein (117 aa).

The N-terminal stretch at 1-20 is a signal peptide; that stretch reads MAAVHLYIISFTALMISSTS.

This is an uncharacterized protein from Saccharomyces cerevisiae (strain ATCC 204508 / S288c) (Baker's yeast).